A 134-amino-acid chain; its full sequence is Transcription antitermination protein NusB (134 aa).

It belongs to the NusB family.

In terms of biological role, involved in transcription antitermination. Required for transcription of ribosomal RNA (rRNA) genes. Binds specifically to the boxA antiterminator sequence of the ribosomal RNA (rrn) operons. This chain is Transcription antitermination protein NusB, found in Shewanella baltica (strain OS223).